A 338-amino-acid chain; its full sequence is MIESDRLVSGKARSEEQVIERAVRPKRLTDYVGQESLKAQLSIFIEAALKRQEALDHVLLFGPPGLGKTTLAAIIAFELGVGLRQTSGPILDKAGDLAALLTNLEPHDVLFIDEIHRLSPAVEEVLYPAMEDYQIDIMIGEGPAARSIKLDLPPFTLIGATTRSGLLTAPLRDRFGISHHLQYYHHDELTQIVMRSAKLFEVAIDKEGAEEIGRRSRGTPRIANRLLRRVRDYAQVRGDGMITKALADEALELLAVDHLGFDALDRRMLLCLVEYFGGGPTGIDTLAVSVGEERGTLEDVVEPYLIQQGFIQRTPRGRVATELAYQYLNIEVPDGRNS.

Residues 4-184 are large ATPase domain (RuvB-L); it reads SDRLVSGKAR…FGISHHLQYY (181 aa). ATP-binding positions include Arg-24, Gly-65, Lys-68, Thr-69, Thr-70, 131-133, Arg-174, Tyr-184, and Arg-221; that span reads EDY. Thr-69 serves as a coordination point for Mg(2+). The segment at 185-255 is small ATPAse domain (RuvB-S); sequence HHDELTQIVM…LADEALELLA (71 aa). The segment at 258–338 is head domain (RuvB-H); the sequence is HLGFDALDRR…NIEVPDGRNS (81 aa). DNA-binding residues include Arg-294, Arg-313, and Arg-318.

It belongs to the RuvB family. In terms of assembly, homohexamer. Forms an RuvA(8)-RuvB(12)-Holliday junction (HJ) complex. HJ DNA is sandwiched between 2 RuvA tetramers; dsDNA enters through RuvA and exits via RuvB. An RuvB hexamer assembles on each DNA strand where it exits the tetramer. Each RuvB hexamer is contacted by two RuvA subunits (via domain III) on 2 adjacent RuvB subunits; this complex drives branch migration. In the full resolvosome a probable DNA-RuvA(4)-RuvB(12)-RuvC(2) complex forms which resolves the HJ.

Its subcellular location is the cytoplasm. It carries out the reaction ATP + H2O = ADP + phosphate + H(+). Its function is as follows. The RuvA-RuvB-RuvC complex processes Holliday junction (HJ) DNA during genetic recombination and DNA repair, while the RuvA-RuvB complex plays an important role in the rescue of blocked DNA replication forks via replication fork reversal (RFR). RuvA specifically binds to HJ cruciform DNA, conferring on it an open structure. The RuvB hexamer acts as an ATP-dependent pump, pulling dsDNA into and through the RuvAB complex. RuvB forms 2 homohexamers on either side of HJ DNA bound by 1 or 2 RuvA tetramers; 4 subunits per hexamer contact DNA at a time. Coordinated motions by a converter formed by DNA-disengaged RuvB subunits stimulates ATP hydrolysis and nucleotide exchange. Immobilization of the converter enables RuvB to convert the ATP-contained energy into a lever motion, pulling 2 nucleotides of DNA out of the RuvA tetramer per ATP hydrolyzed, thus driving DNA branch migration. The RuvB motors rotate together with the DNA substrate, which together with the progressing nucleotide cycle form the mechanistic basis for DNA recombination by continuous HJ branch migration. Branch migration allows RuvC to scan DNA until it finds its consensus sequence, where it cleaves and resolves cruciform DNA. The sequence is that of Holliday junction branch migration complex subunit RuvB from Dichelobacter nodosus (strain VCS1703A).